The primary structure comprises 664 residues: DNA ligase (664 aa).

NAD(+) is bound by residues 32 to 36 (DKEYD) and 80 to 81 (SL). Lys122 acts as the N6-AMP-lysine intermediate in catalysis. NAD(+) contacts are provided by Arg144, Glu178, and Lys314. Zn(2+) is bound by residues Cys407, Cys410, Cys423, and Cys429. The 78-residue stretch at 587-664 (IDENPFMDKT…NEEEFSNKIK (78 aa)) folds into the BRCT domain.

Belongs to the NAD-dependent DNA ligase family. LigA subfamily. Mg(2+) is required as a cofactor. Requires Mn(2+) as cofactor.

It carries out the reaction NAD(+) + (deoxyribonucleotide)n-3'-hydroxyl + 5'-phospho-(deoxyribonucleotide)m = (deoxyribonucleotide)n+m + AMP + beta-nicotinamide D-nucleotide.. Its function is as follows. DNA ligase that catalyzes the formation of phosphodiester linkages between 5'-phosphoryl and 3'-hydroxyl groups in double-stranded DNA using NAD as a coenzyme and as the energy source for the reaction. It is essential for DNA replication and repair of damaged DNA. The sequence is that of DNA ligase from Clostridium botulinum (strain Langeland / NCTC 10281 / Type F).